Reading from the N-terminus, the 599-residue chain is Retrotransposon Gag-like protein 5 (599 aa).

Disordered regions lie at residues 77 to 97 (DPTP…CWPP), 116 to 139 (DYTN…ELHS), and 377 to 450 (FPQE…EEDE). The span at 78-90 (PTPEEEEEEEEEV) shows a compositional bias: acidic residues. 2 stretches are compositionally biased toward acidic residues: residues 393–432 (DEME…EDKE) and 439–450 (DSDENKYEEEDE).

The polypeptide is Retrotransposon Gag-like protein 5 (Mus musculus (Mouse)).